We begin with the raw amino-acid sequence, 244 residues long: Meiotic drive suppressor wtf2 (244 aa).

The span at 1–10 (MKNNYTSLKS) shows a compositional bias: polar residues. The tract at residues 1-68 (MKNNYTSLKS…RENNPSRSTD (68 aa)) is disordered. Residues 17 to 30 (ELKTDHEIDLEKGP) are compositionally biased toward basic and acidic residues. Helical transmembrane passes span 73-93 (FLIKLLISFTPIYVLNVLAIC), 110-130 (WTLFGFWCLVCTLALIFLTYF), 149-169 (WENMPMAFSEVFLFNILVGSP), and 183-203 (LKWSLAEHITFVVLSILVFIA).

It belongs to the WTF family. As to quaternary structure, homomer. Interacts with other proteins that exhibit high sequence similarity.

It localises to the spore membrane. The protein resides in the vacuole membrane. Functionally, acts as a suppressor component of the dual wtf meiotic drive system, and can suppress but not confer meiotic drive by compatible poisons. Wtf meiotic drive systems promote unequal transmission of alleles from the parental zygote to progeny spores by encoding a poison and an antidote from the same locus; the poison is trans-acting and forms toxic aggregates in all spores within an ascus, wherease the antidote is spore-specific and targets aggregates for degradation by the vacuole. Meiotic drive by wtf systems therefore lead to poisoning of all progeny that do not inherit the dual poison/antidote allele, or express a compatible antidote. The polypeptide is Meiotic drive suppressor wtf2 (Schizosaccharomyces kambucha (Fission yeast)).